We begin with the raw amino-acid sequence, 649 residues long: Sodium/nucleoside cotransporter 1 (649 aa).

Residues 1 to 80 (MENDPSRRRE…ARSFCREHMQ (80 aa)) lie on the Cytoplasmic side of the membrane. A helical transmembrane segment spans residues 81 to 104 (LFRWIGTGLLCTGLSAFLLVACLL). Residues 105–109 (DFQRA) are Extracellular-facing. The helical transmembrane segment at 110 to 128 (LALFVLTCVVLTFLGHRLL) threads the bilayer. The Cytoplasmic segment spans residues 129 to 147 (KRLLGPKLRRFLKPQGHPR). The chain crosses the membrane as a helical span at residues 148–167 (LLLWFKRGLALAAFLGLVLW). The Extracellular portion of the chain corresponds to 168–178 (LSLDTSQRPEQ). The chain crosses the membrane as a helical span at residues 179-195 (LVSFAGICVFVALLFAC). At 196–201 (SKHHCA) the chain is on the cytoplasmic side. Residues 202–222 (VSWRAVSWGLGLQFVLGLLVI) form a helical membrane-spanning segment. Topologically, residues 223-261 (RTEPGFIAFEWLGEQIRIFLSYTKAGSSFVFGEALVKDV) are extracellular. Residues 262–283 (FAFQVLPIIVFFSCVISVLYHV) form a helical membrane-spanning segment. Topologically, residues 284–294 (GLMQWVILKIA) are cytoplasmic. A helical transmembrane segment spans residues 295-318 (WLMQVTMGTTATETLSVAGNIFVS). Over 319–337 (QTEAPLLIRPYLADMTLSE) the chain is Extracellular. Residues 338-360 (VHVVMTGGYATIAGSLLGAYISF) traverse the membrane as a helical segment. Over 361 to 366 (GIDATS) the chain is Cytoplasmic. The helical transmembrane segment at 367-386 (LIAASVMAAPCALALSKLVY) threads the bilayer. The Extracellular segment spans residues 387 to 423 (PEVEESKFRREEGVKLTYGDAQNLIEAASTGAAISVK). A helical membrane pass occupies residues 424 to 446 (VVANIAANLIAFLAVLDFINAAL). At 447-457 (SWLGDMVDIQG) the chain is on the cytoplasmic side. Residues 458–479 (LSFQLICSYILRPVAFLMGVAW) traverse the membrane as a helical segment. Residues 480–534 (EDCPVVAELLGIKLFLNEFVAYQDLSKYKQRRLAGAEEWVGDRKQWISVRAEVLT) are Extracellular-facing. The chain crosses the membrane as a helical span at residues 535–558 (TFALCGFANFSSIGIMLGGLTSMV). The Cytoplasmic segment spans residues 559–569 (PQRKSDFSQIV). Residues 570–592 (LRALFTGACVSLVNACMAGILYM) form a helical membrane-spanning segment. The Extracellular portion of the chain corresponds to 593–649 (PRGAEVDCMSLLNTTLSSSSFEIYQCCREAFQSVNPEFSPEALDNCCRFYNHTICAQ). Residues asparagine 605 and asparagine 643 are each glycosylated (N-linked (GlcNAc...) asparagine).

The protein belongs to the concentrative nucleoside transporter (CNT) (TC 2.A.41) family. In terms of processing, N-glycosylated. N-glycosylation is required for localization to the plasma membrane and the transporter activity. As to expression, expressed in kidney.

It localises to the cell membrane. Its subcellular location is the apical cell membrane. The enzyme catalyses uridine(out) + Na(+)(out) = uridine(in) + Na(+)(in). It carries out the reaction thymidine(out) + Na(+)(out) = thymidine(in) + Na(+)(in). It catalyses the reaction cytidine(out) + Na(+)(out) = cytidine(in) + Na(+)(in). The catalysed reaction is adenosine(out) + Na(+)(out) = adenosine(in) + Na(+)(in). Its activity is regulated as follows. Due to its high apparent affinity but slow transport, adenosine could act as a negative regulator of pyrimidine transport under some conditions. Its function is as follows. Sodium and pyrimidine nucleoside symporter of the plasma membrane that imports uridine, thymidine and cytidine into cells by coupling their transport to the transmembrane sodium electrochemical gradient. Also transports adenosine, an atypical substrate transported with high apparent affinity, but low maximum velocity. Therefore, exhibits the transport characteristics of the nucleoside transport system cit or N2 subtype (N2/cit). Involved in renal nucleoside (re)absorption. The chain is Sodium/nucleoside cotransporter 1 from Homo sapiens (Human).